A 231-amino-acid chain; its full sequence is Large ribosomal subunit protein uL1 (231 aa).

It belongs to the universal ribosomal protein uL1 family. In terms of assembly, part of the 50S ribosomal subunit.

Binds directly to 23S rRNA. The L1 stalk is quite mobile in the ribosome, and is involved in E site tRNA release. In terms of biological role, protein L1 is also a translational repressor protein, it controls the translation of the L11 operon by binding to its mRNA. In Gluconacetobacter diazotrophicus (strain ATCC 49037 / DSM 5601 / CCUG 37298 / CIP 103539 / LMG 7603 / PAl5), this protein is Large ribosomal subunit protein uL1.